We begin with the raw amino-acid sequence, 60 residues long: Large ribosomal subunit protein uL30 (60 aa).

Belongs to the universal ribosomal protein uL30 family. Part of the 50S ribosomal subunit.

This is Large ribosomal subunit protein uL30 from Mycobacteroides abscessus (strain ATCC 19977 / DSM 44196 / CCUG 20993 / CIP 104536 / JCM 13569 / NCTC 13031 / TMC 1543 / L948) (Mycobacterium abscessus).